Here is a 217-residue protein sequence, read N- to C-terminus: Adenylate kinase (217 aa).

10 to 15 (GAGKGT) contacts ATP. The tract at residues 30–59 (STGDMFRAAMKEETQLGLEAKSFIDKGELV) is NMP. AMP contacts are provided by residues threonine 31, arginine 36, 57-59 (ELV), 85-88 (GFPR), and glutamine 92. The LID stretch occupies residues 126–163 (GRRICKNCGATYHLVFNPPAKENVCDKCGGELYQRADD). Arginine 127 serves as a coordination point for ATP. Zn(2+) contacts are provided by cysteine 130 and cysteine 133. 136–137 (TY) contacts ATP. Zn(2+)-binding residues include cysteine 150 and cysteine 153. Residues arginine 160 and arginine 171 each coordinate AMP. Position 199 (lysine 199) interacts with ATP.

Belongs to the adenylate kinase family. In terms of assembly, monomer.

It localises to the cytoplasm. The enzyme catalyses AMP + ATP = 2 ADP. The protein operates within purine metabolism; AMP biosynthesis via salvage pathway; AMP from ADP: step 1/1. Functionally, catalyzes the reversible transfer of the terminal phosphate group between ATP and AMP. Plays an important role in cellular energy homeostasis and in adenine nucleotide metabolism. This Bacillus pumilus (strain SAFR-032) protein is Adenylate kinase.